The sequence spans 599 residues: Ecdysone oxidase (599 aa).

FAD contacts are provided by residues 137-140 (NDMV) and 537-538 (WH). H538 acts as the Proton acceptor in catalysis.

It belongs to the GMC oxidoreductase family. Requires FAD as cofactor.

It catalyses the reaction ecdysone + O2 = 3-dehydroecdysone + H2O2. Involved in the inactivation of ecdysteroid molting hormones by converting ecdysteroids into 3-dehydroecdysteroids. The sequence is that of Ecdysone oxidase from Spodoptera littoralis (Egyptian cotton leafworm).